Here is a 729-residue protein sequence, read N- to C-terminus: Fatty acid oxidation complex subunit alpha (729 aa).

The tract at residues 1–189 (MLYKGDTLYL…KIGLVDGVVK (189 aa)) is enoyl-CoA hydratase/isomerase. Asp296 contributes to the substrate binding site. A 3-hydroxyacyl-CoA dehydrogenase region spans residues 311–729 (ETPKQAAVLG…ARPVGDLKTA (419 aa)). NAD(+)-binding positions include Met324, Asp343, 400-402 (VVE), Lys407, and Ser429. Residue His450 is the For 3-hydroxyacyl-CoA dehydrogenase activity of the active site. Asn453 serves as a coordination point for NAD(+). Residues Asn500 and Tyr660 each contribute to the substrate site. The tract at residues 708–729 (RHNEPYYPPVEPARPVGDLKTA) is disordered.

In the N-terminal section; belongs to the enoyl-CoA hydratase/isomerase family. It in the C-terminal section; belongs to the 3-hydroxyacyl-CoA dehydrogenase family. As to quaternary structure, heterotetramer of two alpha chains (FadB) and two beta chains (FadA).

It catalyses the reaction a (3S)-3-hydroxyacyl-CoA + NAD(+) = a 3-oxoacyl-CoA + NADH + H(+). It carries out the reaction a (3S)-3-hydroxyacyl-CoA = a (2E)-enoyl-CoA + H2O. The enzyme catalyses a 4-saturated-(3S)-3-hydroxyacyl-CoA = a (3E)-enoyl-CoA + H2O. The catalysed reaction is (3S)-3-hydroxybutanoyl-CoA = (3R)-3-hydroxybutanoyl-CoA. It catalyses the reaction a (3Z)-enoyl-CoA = a 4-saturated (2E)-enoyl-CoA. It carries out the reaction a (3E)-enoyl-CoA = a 4-saturated (2E)-enoyl-CoA. The protein operates within lipid metabolism; fatty acid beta-oxidation. Its function is as follows. Involved in the aerobic and anaerobic degradation of long-chain fatty acids via beta-oxidation cycle. Catalyzes the formation of 3-oxoacyl-CoA from enoyl-CoA via L-3-hydroxyacyl-CoA. It can also use D-3-hydroxyacyl-CoA and cis-3-enoyl-CoA as substrate. The polypeptide is Fatty acid oxidation complex subunit alpha (Escherichia coli (strain K12 / MC4100 / BW2952)).